The chain runs to 277 residues: MNCGKIILLFITIIGVAKSREENCKCGWDNPSRIVNGVETEINEFPMVARLIYPSPGMYCGGTIITPQHIVTAAHCLQKYKRTNYTGIHVVVGEHDYTTDTETNVTKRYTIAEVTIHPNYNSHNNDIAIVKTNERFEYSMKVGPVCLPFNYMTRNLTNETVTALGWGKLRYNGQNSKVLRKVDLHVITREQCETHYGAAIANANLLCTFDVGRDACQNDSGGPILWRSPTTDNLILVGVVNFGRTCADDAPGGNARVTSFMEFIHNATIGETYCKAD.

Residues 1 to 19 (MNCGKIILLFITIIGVAKS) form the signal peptide. Residues 34 to 269 (IVNGVETEIN…FMEFIHNATI (236 aa)) enclose the Peptidase S1 domain. The cysteines at positions 60 and 76 are disulfide-linked. The active-site Charge relay system is His75. 2 N-linked (GlcNAc...) asparagine glycosylation sites follow: Asn84 and Asn104. Asp126 functions as the Charge relay system in the catalytic mechanism. N-linked (GlcNAc...) asparagine glycans are attached at residues Asn155 and Asn158. 2 cysteine pairs are disulfide-bonded: Cys192-Cys207 and Cys216-Cys246. N-linked (GlcNAc...) asparagine glycosylation occurs at Asn218. Ser220 functions as the Charge relay system in the catalytic mechanism. A glycan (N-linked (GlcNAc...) asparagine) is linked at Asn266.

The protein belongs to the peptidase S1 family. Expressed by the venom duct.

The protein resides in the secreted. This chain is Venom serine protease, found in Polistes dominula (European paper wasp).